A 100-amino-acid polypeptide reads, in one-letter code: MVKRTHGYRYKSRKLLRKKPRERGLSGLSRLLYEYKPGDRVVIDIDPTFVENAPHRRYQGKVGVVIGTRGRAYVIETYLGDKKKILVVTPEHLKPHQGGS.

Residues 1-21 (MVKRTHGYRYKSRKLLRKKPR) are disordered.

This sequence belongs to the eukaryotic ribosomal protein eL21 family.

The chain is Large ribosomal subunit protein eL21 from Pyrobaculum islandicum (strain DSM 4184 / JCM 9189 / GEO3).